The chain runs to 95 residues: Co-chaperonin GroES (95 aa).

Belongs to the GroES chaperonin family. Heptamer of 7 subunits arranged in a ring. Interacts with the chaperonin GroEL.

The protein localises to the cytoplasm. Together with the chaperonin GroEL, plays an essential role in assisting protein folding. The GroEL-GroES system forms a nano-cage that allows encapsulation of the non-native substrate proteins and provides a physical environment optimized to promote and accelerate protein folding. GroES binds to the apical surface of the GroEL ring, thereby capping the opening of the GroEL channel. In Maricaulis maris (strain MCS10) (Caulobacter maris), this protein is Co-chaperonin GroES.